The following is a 157-amino-acid chain: Endoribonuclease YbeY (157 aa).

H115, H119, and H125 together coordinate Zn(2+).

The protein belongs to the endoribonuclease YbeY family. The cofactor is Zn(2+).

It is found in the cytoplasm. Single strand-specific metallo-endoribonuclease involved in late-stage 70S ribosome quality control and in maturation of the 3' terminus of the 16S rRNA. The protein is Endoribonuclease YbeY of Micrococcus luteus (strain ATCC 4698 / DSM 20030 / JCM 1464 / CCM 169 / CCUG 5858 / IAM 1056 / NBRC 3333 / NCIMB 9278 / NCTC 2665 / VKM Ac-2230) (Micrococcus lysodeikticus).